Here is a 265-residue protein sequence, read N- to C-terminus: Auxin-responsive protein IAA22 (265 aa).

2 disordered regions span residues 54 to 88 (LSTPKPADADDLMNKMKPCSDEGHGSRDAAQERRP) and 172 to 199 (DGREAGSGRRPAAGVDQVSERPDVSPAM). Positions 65 to 88 (LMNKMKPCSDEGHGSRDAAQERRP) are enriched in basic and acidic residues. The 104-residue stretch at 91 to 194 (TMFVKVNLEG…GVDQVSERPD (104 aa)) folds into the PB1 domain.

It belongs to the Aux/IAA family. Homodimers and heterodimers. Highly expressed in flowers. Expressed in roots and seedlings.

It is found in the nucleus. Aux/IAA proteins are short-lived transcriptional factors that function as repressors of early auxin response genes at low auxin concentrations. This chain is Auxin-responsive protein IAA22 (IAA22), found in Oryza sativa subsp. japonica (Rice).